The following is a 147-amino-acid chain: MTLRLNDLKPADGARTQRTRVGRGIGSGLGKTAGRGHKGSFARKGGGKIKAGFEGGQTPMQRRLPKIGFRSKMARDTAEVLSYQLDKLDAGDVDFVALRAANLVPSRAKKAKIVLKGELSKKFVLKGVAATAGAKAAIEAAGGSVEE.

Basic and acidic residues predominate over residues 1-12 (MTLRLNDLKPAD). Residues 1 to 61 (MTLRLNDLKP…GFEGGQTPMQ (61 aa)) form a disordered region. The segment covering 23–33 (RGIGSGLGKTA) has biased composition (gly residues). Over residues 34–47 (GRGHKGSFARKGGG) the composition is skewed to basic residues.

Belongs to the universal ribosomal protein uL15 family. Part of the 50S ribosomal subunit.

Binds to the 23S rRNA. This chain is Large ribosomal subunit protein uL15, found in Xanthomonas oryzae pv. oryzae (strain MAFF 311018).